Consider the following 1724-residue polypeptide: Sperm flagellar protein 2 (1724 aa).

A Calponin-homology (CH) domain is found at 1 to 105 (MSEILCQWLN…LLYQLYIALQ (105 aa)). Coiled coils occupy residues 170-203 (KAIE…KDLQ) and 255-351 (RRLL…REKE). A disordered region spans residues 545 to 576 (HERQKSGKTPPTQEDDKRDPVVNQEKVSKTQD). Residues 558–576 (EDDKRDPVVNQEKVSKTQD) are compositionally biased toward basic and acidic residues. A coiled-coil region spans residues 665–691 (NQAKLLEEALTGYKRKFLQLKKKKEQM). The interval 828–910 (EEKETEKKAG…PTAPPPPKAG (83 aa)) is disordered. The span at 853 to 862 (EAEKDKELHQ) shows a compositional bias: basic and acidic residues. Positions 995–1021 (EDLWEDEETKAELHQRVNDLRDRLWDI) form a coiled coil. Over residues 1177–1194 (RLTEEEKEPPQLDSKEKS) the composition is skewed to basic and acidic residues. Disordered regions lie at residues 1177–1241 (RLTE…EMAE), 1580–1618 (VSPI…NANT), and 1704–1724 (SEHA…DEKK). A compositionally biased stretch (basic residues) spans 1210–1221 (PKKKKTDKKGKG). An interaction with IFT20 region spans residues 1228–1580 (EVSPVTVTPE…MAEKTSISTV (353 aa)). Residues 1592 to 1607 (SSAKEDRELKEEKDDQ) are compositionally biased toward basic and acidic residues.

In terms of assembly, interacts (via C-terminus) with IFT20. Interacts with DYNC1I2. As to expression, highly expressed in testis, where it primarily localizes to late spermatocytes, round spermatids and elongating spermatids (at protein level). Found in Sertoli cells of the testis (at protein level). Expressed at lower levels in epididymis (at protein level). Detected in lung, brain, liver and kidney. Also detected in bone, cartilage, trachea, pituitary gland and eye. Expressed in osteoblasts and chondrocytes.

It is found in the cell projection. Its subcellular location is the cilium. The protein localises to the flagellum. It localises to the cytoplasm. The protein resides in the cytoskeleton. It is found in the golgi apparatus. In terms of biological role, required for correct axoneme development in spermatozoa. Important for normal development of the manchette and sperm head morphology. Essential for male fertility. Plays a role in localization of the intraflagellar transport protein IFT20 to the manchette, suggesting function as an adapter for dynein-mediated protein transport during spermatogenesis. Also plays a role in bone growth where it seems to be required for normal osteoblast differentiation. In Mus musculus (Mouse), this protein is Sperm flagellar protein 2 (Spef2).